Consider the following 647-residue polypeptide: DNA ligase (647 aa).

Residues 30-34 (DEEYD), 79-80 (SM), and Glu105 each bind NAD(+). The active-site N6-AMP-lysine intermediate is the Lys107. 3 residues coordinate NAD(+): Arg128, Glu162, and Lys301. Residues Cys395, Cys398, Cys411, and Cys416 each contribute to the Zn(2+) site. Residues 570–647 (KSDGVIFGKT…ESAFNELVKE (78 aa)) enclose the BRCT domain.

It belongs to the NAD-dependent DNA ligase family. LigA subfamily. It depends on Mg(2+) as a cofactor. Mn(2+) is required as a cofactor.

The catalysed reaction is NAD(+) + (deoxyribonucleotide)n-3'-hydroxyl + 5'-phospho-(deoxyribonucleotide)m = (deoxyribonucleotide)n+m + AMP + beta-nicotinamide D-nucleotide.. DNA ligase that catalyzes the formation of phosphodiester linkages between 5'-phosphoryl and 3'-hydroxyl groups in double-stranded DNA using NAD as a coenzyme and as the energy source for the reaction. It is essential for DNA replication and repair of damaged DNA. This chain is DNA ligase, found in Campylobacter jejuni (strain RM1221).